The sequence spans 568 residues: Delta 8-(E)-sphingolipid desaturase (568 aa).

The 76-residue stretch at 2-77 (DNIISRGEIE…FRKWRIGRID (76 aa)) folds into the Cytochrome b5 heme-binding domain. His-37 and His-60 together coordinate heme. 2 consecutive transmembrane segments (helical) span residues 241–261 (FWSA…AHDA) and 272–292 (LDNI…LGWW). The Histidine box-1 motif lies at 259-263 (HDAGH). Positions 296–300 (HNVHH) match the Histidine box-2 motif. 3 helical membrane passes run 352-377 (YLYY…LLGL), 389-409 (YFEL…LVGC), and 421-441 (IMVS…SHFA). The short motif at 480–484 (QVVHH) is the Histidine box-3 element. Residues 549–560 (ATGEREADEKTY) show a composition bias toward basic and acidic residues. The disordered stretch occupies residues 549-568 (ATGEREADEKTYRTKSIKNA).

This sequence belongs to the fatty acid desaturase type 1 family.

The protein resides in the membrane. The catalysed reaction is an N-acylsphing-4-enine + 2 Fe(II)-[cytochrome b5] + O2 + 2 H(+) = a (4E,8E)-4-sphinga-4,8-dienine ceramide + 2 Fe(III)-[cytochrome b5] + 2 H2O. It participates in lipid metabolism; sphingolipid metabolism. Delta(8)-fatty-acid desaturase which introduces a double bond at the 8-position in the long-chain base (LCB) of ceramides. Required for the formation of the di-unsaturated sphingoid base (E,E)-sphinga-4,8-dienine during glucosylceramide (GluCer) biosynthesis. This is Delta 8-(E)-sphingolipid desaturase from Lachancea kluyveri (strain ATCC 58438 / CBS 3082 / BCRC 21498 / NBRC 1685 / JCM 7257 / NCYC 543 / NRRL Y-12651) (Yeast).